A 112-amino-acid chain; its full sequence is uncharacterized protein (112 aa).

Disordered regions lie at residues 1-53 (MSKL…QRLK) and 80-112 (MINQ…MLEL). Polar residues predominate over residues 8 to 22 (SALQKLIESQKNPNA). Over residues 86–96 (ETKKRKRKQKK) the composition is skewed to basic residues. Residues 101-112 (DYGVFEEDMLEL) are compositionally biased toward acidic residues.

It localises to the nucleus. Its subcellular location is the nucleolus. This is an uncharacterized protein from Schizosaccharomyces pombe (strain 972 / ATCC 24843) (Fission yeast).